Consider the following 368-residue polypeptide: Phospho-N-acetylmuramoyl-pentapeptide-transferase (368 aa).

A run of 9 helical transmembrane segments spans residues 30–50 (AAAVTSLLICLVAGPAFIKYL), 72–92 (LPTMGGIMIIFAIEVSVFLWA), 99–119 (VWLIMVAVFWMGVIGFLDDYM), 139–159 (VLLGLFIGLYTWFDPAFSVLL), 170–190 (LTIDYGIFYIPVVIFIITAVS), 201–221 (GLASGSSAIVVFALGGFAYLA), 238–258 (GGEIAVVSMAIVMACVGFLWF), 264–286 (EIIMGDTGSLALGSAIAVIALLI), and 345–365 (KIVIRFWIVTVLFFLASLMTL).

It belongs to the glycosyltransferase 4 family. MraY subfamily. Mg(2+) serves as cofactor.

The protein localises to the cell inner membrane. It catalyses the reaction UDP-N-acetyl-alpha-D-muramoyl-L-alanyl-gamma-D-glutamyl-meso-2,6-diaminopimeloyl-D-alanyl-D-alanine + di-trans,octa-cis-undecaprenyl phosphate = di-trans,octa-cis-undecaprenyl diphospho-N-acetyl-alpha-D-muramoyl-L-alanyl-D-glutamyl-meso-2,6-diaminopimeloyl-D-alanyl-D-alanine + UMP. It participates in cell wall biogenesis; peptidoglycan biosynthesis. Functionally, catalyzes the initial step of the lipid cycle reactions in the biosynthesis of the cell wall peptidoglycan: transfers peptidoglycan precursor phospho-MurNAc-pentapeptide from UDP-MurNAc-pentapeptide onto the lipid carrier undecaprenyl phosphate, yielding undecaprenyl-pyrophosphoryl-MurNAc-pentapeptide, known as lipid I. In Chlorobium limicola (strain DSM 245 / NBRC 103803 / 6330), this protein is Phospho-N-acetylmuramoyl-pentapeptide-transferase.